The primary structure comprises 461 residues: Squalene synthase BSS (461 aa).

NADP(+) is bound by residues Arg51 and Arg76. Positions 79, 82, and 83 each coordinate Mg(2+). Residues Arg219, Lys322, and Arg324 each contribute to the NADP(+) site. The chain crosses the membrane as a helical span at residues 430–450 (VTQHWWSILIFLISIAVFFIP).

This sequence belongs to the phytoene/squalene synthase family. The cofactor is Mg(2+).

The protein localises to the endoplasmic reticulum membrane. It carries out the reaction 2 (2E,6E)-farnesyl diphosphate + NADPH + H(+) = squalene + 2 diphosphate + NADP(+). The enzyme catalyses 2 (2E,6E)-farnesyl diphosphate + NADH + H(+) = squalene + 2 diphosphate + NAD(+). In terms of biological role, converts farnesyl diphosphate (FPP) into squalene, a precursor for sterol biosynthesis in eukaryotes. Does not possess botryococcene synthase activity. This Botryococcus braunii (Green alga) protein is Squalene synthase BSS.